We begin with the raw amino-acid sequence, 126 residues long: Protein HEAT-INDUCED TAS1 TARGET 3 (126 aa).

The protein belongs to the heat induced plant HTT protein family. In terms of tissue distribution, expressed in seedlings, leaves, stems, inflorescences and siliques.

Its subcellular location is the cytoplasm. The protein localises to the nucleus. Functionally, mediates both basal and acquired thermotolerance. In Arabidopsis thaliana (Mouse-ear cress), this protein is Protein HEAT-INDUCED TAS1 TARGET 3.